Consider the following 148-residue polypeptide: D-aminoacyl-tRNA deacylase (148 aa).

Residues 136 to 137 (GP) carry the Gly-cisPro motif, important for rejection of L-amino acids motif.

This sequence belongs to the DTD family. Homodimer.

Its subcellular location is the cytoplasm. It carries out the reaction glycyl-tRNA(Ala) + H2O = tRNA(Ala) + glycine + H(+). It catalyses the reaction a D-aminoacyl-tRNA + H2O = a tRNA + a D-alpha-amino acid + H(+). Functionally, an aminoacyl-tRNA editing enzyme that deacylates mischarged D-aminoacyl-tRNAs. Also deacylates mischarged glycyl-tRNA(Ala), protecting cells against glycine mischarging by AlaRS. Acts via tRNA-based rather than protein-based catalysis; rejects L-amino acids rather than detecting D-amino acids in the active site. By recycling D-aminoacyl-tRNA to D-amino acids and free tRNA molecules, this enzyme counteracts the toxicity associated with the formation of D-aminoacyl-tRNA entities in vivo and helps enforce protein L-homochirality. This is D-aminoacyl-tRNA deacylase from Streptococcus mutans serotype c (strain ATCC 700610 / UA159).